The chain runs to 852 residues: Bifunctional uridylyltransferase/uridylyl-removing enzyme (852 aa).

A uridylyltransferase region spans residues 1-318 (MPANLSSALE…STPLRVTLRI (318 aa)). A uridylyl-removing region spans residues 319–672 (DDDYIQVNNQ…SRILPKSDSF (354 aa)). Residues 436 to 558 (VDDHILTVVR…VQTHERLSAL (123 aa)) form the HD domain. 2 consecutive ACT domains span residues 673-757 (QVMV…SRSR) and 785-852 (SVEI…EQLS).

This sequence belongs to the GlnD family. The cofactor is Mg(2+).

The enzyme catalyses [protein-PII]-L-tyrosine + UTP = [protein-PII]-uridylyl-L-tyrosine + diphosphate. It carries out the reaction [protein-PII]-uridylyl-L-tyrosine + H2O = [protein-PII]-L-tyrosine + UMP + H(+). With respect to regulation, uridylyltransferase (UTase) activity is inhibited by glutamine, while glutamine activates uridylyl-removing (UR) activity. In terms of biological role, modifies, by uridylylation and deuridylylation, the PII regulatory proteins (GlnB and homologs), in response to the nitrogen status of the cell that GlnD senses through the glutamine level. Under low glutamine levels, catalyzes the conversion of the PII proteins and UTP to PII-UMP and PPi, while under higher glutamine levels, GlnD hydrolyzes PII-UMP to PII and UMP (deuridylylation). Thus, controls uridylylation state and activity of the PII proteins, and plays an important role in the regulation of nitrogen assimilation and metabolism. The polypeptide is Bifunctional uridylyltransferase/uridylyl-removing enzyme (Neisseria meningitidis serogroup B (strain ATCC BAA-335 / MC58)).